We begin with the raw amino-acid sequence, 631 residues long: Glutathione S-transferase C-terminal domain-containing protein (631 aa).

Residues 128 to 330 (LGFKKTCLKA…QEVPRVQTAA (203 aa)) enclose the GST C-terminal domain. 2 disordered regions span residues 188–233 (HNDD…SSSA) and 345–373 (TTSS…GGPR). Positions 211-224 (AKEKTKSKGHRQET) are enriched in basic and acidic residues. S231 carries the post-translational modification Phosphoserine.

Belongs to the GSTCD family.

It is found in the cytoplasm. The chain is Glutathione S-transferase C-terminal domain-containing protein (GSTCD) from Bos taurus (Bovine).